Here is a 220-residue protein sequence, read N- to C-terminus: Ribosome maturation factor RimP (220 aa).

The span at 1-15 (MSQRGRATRPTGPTG) shows a compositional bias: low complexity. 2 disordered regions span residues 1–35 (MSQRGRATRPTGPTGRPRRTGGQRSAGRVSRGGDL) and 184–220 (PGRVQVEFTRPGETDGADGADEAGDFDDDDDVEGEER). Over residues 198–220 (DGADGADEAGDFDDDDDVEGEER) the composition is skewed to acidic residues.

Belongs to the RimP family.

It localises to the cytoplasm. Its function is as follows. Required for maturation of 30S ribosomal subunits. In Salinispora tropica (strain ATCC BAA-916 / DSM 44818 / JCM 13857 / NBRC 105044 / CNB-440), this protein is Ribosome maturation factor RimP.